Consider the following 252-residue polypeptide: Hydroxyacylglutathione hydrolase (252 aa).

Zn(2+) is bound by residues His-54, His-56, Asp-58, His-59, His-111, Asp-128, and His-166.

It belongs to the metallo-beta-lactamase superfamily. Glyoxalase II family. Monomer. It depends on Zn(2+) as a cofactor.

The enzyme catalyses an S-(2-hydroxyacyl)glutathione + H2O = a 2-hydroxy carboxylate + glutathione + H(+). It participates in secondary metabolite metabolism; methylglyoxal degradation; (R)-lactate from methylglyoxal: step 2/2. Its function is as follows. Thiolesterase that catalyzes the hydrolysis of S-D-lactoyl-glutathione to form glutathione and D-lactic acid. The sequence is that of Hydroxyacylglutathione hydrolase from Vibrio campbellii (strain ATCC BAA-1116).